The primary structure comprises 209 residues: Transmembrane emp24 domain-containing protein B (209 aa).

The signal sequence occupies residues 1 to 24 (MNKTNQLINICILVTLFLIGSSSA). Residues 25–174 (LTLQVEPKSQ…RDTSESTNAR (150 aa)) lie on the Lumenal side of the membrane. The GOLD domain occupies 34–119 (QECFYNFIES…AKVVTFTWAS (86 aa)). A helical transmembrane segment spans residues 175-195 (VVWWTIAEVIVLVVMGVGQIW). The Cytoplasmic portion of the chain corresponds to 196 to 209 (YLRKWFDNKSTGRV).

This sequence belongs to the EMP24/GP25L family.

It localises to the cytoplasmic vesicle membrane. In terms of biological role, could have a role in the budding of coatomer-coated and other species of coated vesicles. This Dictyostelium discoideum (Social amoeba) protein is Transmembrane emp24 domain-containing protein B (empB).